The primary structure comprises 713 residues: Serine/threonine-protein kinase SSN3 (713 aa).

The region spanning 66 to 484 is the Protein kinase domain; sequence YTILGFLSSG…ANQALEHAWF (419 aa). 72 to 80 contributes to the ATP binding site; sequence LSSGTYGRV. The span at 104 to 120 shows a compositional bias: low complexity; sequence NAGTGSGTATVGSGAST. The segment at 104–188 is disordered; it reads NAGTGSGTAT…GGSDNTLQLS (85 aa). The segment covering 129-142 has biased composition (polar residues); the sequence is QQHQLLDSPSSSLH. Residues 158–175 are compositionally biased toward low complexity; it reads GTPSASPSLSASLGTSTA. Residue K201 coordinates ATP. D304 functions as the Proton acceptor in the catalytic mechanism. A compositionally biased stretch (polar residues) spans 657-672; that stretch reads SNPATVRSSHSIGSTE. The interval 657–713 is disordered; it reads SNPATVRSSHSIGSTESITPTTSSQPIPAQPSSAPLARTTNLVATATRNQQRKRQRN. Low complexity predominate over residues 673-691; it reads SITPTTSSQPIPAQPSSAP. Polar residues predominate over residues 694 to 705; the sequence is RTTNLVATATRN.

The protein belongs to the protein kinase superfamily. CMGC Ser/Thr protein kinase family. CDC2/CDKX subfamily. In terms of assembly, component of the srb8-11 complex, a regulatory module of the Mediator complex. Mg(2+) is required as a cofactor.

It localises to the nucleus. The enzyme catalyses L-seryl-[protein] + ATP = O-phospho-L-seryl-[protein] + ADP + H(+). It carries out the reaction L-threonyl-[protein] + ATP = O-phospho-L-threonyl-[protein] + ADP + H(+). It catalyses the reaction [DNA-directed RNA polymerase] + ATP = phospho-[DNA-directed RNA polymerase] + ADP + H(+). Component of the srb8-11 complex. The srb8-11 complex is a regulatory module of the Mediator complex which is itself dependent transcription. The srb8-11 complex may be involved in the transcriptional repression of a subset of genes regulated by Mediator. It may inhibit the association of the Mediator complex with RNA polymerase II to form the holoenzyme complex. The srb8-11 complex phosphorylates the C-terminal domain (CTD) of the largest subunit of RNA polymerase II. The protein is Serine/threonine-protein kinase SSN3 (SSN3) of Mycosarcoma maydis (Corn smut fungus).